The sequence spans 350 residues: Biotin synthase (350 aa).

A Radical SAM core domain is found at 41–268; the sequence is NEVQISRLLS…LSRVRLSAGR (228 aa). [4Fe-4S] cluster is bound by residues Cys56, Cys60, and Cys63. Positions 100, 131, 191, and 263 each coordinate [2Fe-2S] cluster.

Belongs to the radical SAM superfamily. Biotin synthase family. As to quaternary structure, homodimer. [4Fe-4S] cluster is required as a cofactor. Requires [2Fe-2S] cluster as cofactor.

It catalyses the reaction (4R,5S)-dethiobiotin + (sulfur carrier)-SH + 2 reduced [2Fe-2S]-[ferredoxin] + 2 S-adenosyl-L-methionine = (sulfur carrier)-H + biotin + 2 5'-deoxyadenosine + 2 L-methionine + 2 oxidized [2Fe-2S]-[ferredoxin]. It participates in cofactor biosynthesis; biotin biosynthesis; biotin from 7,8-diaminononanoate: step 2/2. Catalyzes the conversion of dethiobiotin (DTB) to biotin by the insertion of a sulfur atom into dethiobiotin via a radical-based mechanism. The protein is Biotin synthase of Shewanella putrefaciens (strain CN-32 / ATCC BAA-453).